The chain runs to 197 residues: ADP-ribosylation factor-like protein 16 (197 aa).

GTP-binding positions include 30–37 (GATGVGKT), 82–86 (ELGGC), and 139–142 (NKID).

The protein belongs to the small GTPase superfamily. Arf family. As to quaternary structure, interacts with RIGI; this interaction is GTP-dependent and induced upon viral infection; this interaction suppresses the RNA sensing activity of RIGI.

It is found in the cytoplasm. Functionally, may suppress the RNA sensing activity of RIGI in a GTP-dependent. The chain is ADP-ribosylation factor-like protein 16 from Homo sapiens (Human).